The primary structure comprises 356 residues: Caspase activity and apoptosis inhibitor 1 (356 aa).

The segment covering 1–14 (MTGKKSSREKRRKR) has biased composition (basic residues). 2 disordered regions span residues 1–24 (MTGKKSSREKRRKRSGQEAAASLA) and 54–80 (VAGGAERSERRKRRSTDSSSSVSGSLQ). Ser68 is subject to Phosphoserine. Thr69 is subject to Phosphothreonine. Lys84 is covalently cross-linked (Glycyl lysine isopeptide (Lys-Gly) (interchain with G-Cter in SUMO2)). Ser100 and Ser183 each carry phosphoserine. The tract at residues 208–234 (DSTSSLRENKQPEVLESKQGKGEDSDV) is disordered. Basic and acidic residues predominate over residues 214–231 (RENKQPEVLESKQGKGED). Positions 276 to 306 (ENTVQSEAGQIDDLERDIEKSVNEILGLAES) form a coiled coil. Ser307 is subject to Phosphoserine.

Its function is as follows. Anti-apoptotic protein that modulates a caspase-10 dependent mitochondrial caspase-3/9 feedback amplification loop. This chain is Caspase activity and apoptosis inhibitor 1 (Caap1), found in Mus musculus (Mouse).